The sequence spans 224 residues: Ribosomal RNA small subunit methyltransferase G (224 aa).

S-adenosyl-L-methionine contacts are provided by residues glycine 92, leucine 97, 143 to 144, and arginine 156; that span reads VE.

This sequence belongs to the methyltransferase superfamily. RNA methyltransferase RsmG family.

It localises to the cytoplasm. It catalyses the reaction guanosine(527) in 16S rRNA + S-adenosyl-L-methionine = N(7)-methylguanosine(527) in 16S rRNA + S-adenosyl-L-homocysteine. Its function is as follows. Specifically methylates the N7 position of guanine in position 527 of 16S rRNA. The protein is Ribosomal RNA small subunit methyltransferase G of Albidiferax ferrireducens (strain ATCC BAA-621 / DSM 15236 / T118) (Rhodoferax ferrireducens).